Here is a 133-residue protein sequence, read N- to C-terminus: Small ribosomal subunit protein eS17 (133 aa).

Belongs to the eukaryotic ribosomal protein eS17 family.

The protein is Small ribosomal subunit protein eS17 (RpS17) of Spodoptera frugiperda (Fall armyworm).